A 488-amino-acid chain; its full sequence is Dihydrolipoyl dehydrogenase, mitochondrial (488 aa).

Residues 1 to 25 (MLRINRISNLRTFGQRFFSTEQQDV) constitute a mitochondrion transit peptide. Residues 52–61 (EKRGKLGGTC), Lys70, Gly134, and 163–165 (TGS) each bind FAD. Cys61 and Cys66 are disulfide-bonded. NAD(+) is bound by residues 200-207 (GGGVIGLE), Glu223, Val257, and Gly294. FAD contacts are provided by residues Asp335 and 341–344 (MLAH). Residue His467 is the Proton acceptor of the active site.

This sequence belongs to the class-I pyridine nucleotide-disulfide oxidoreductase family. FAD serves as cofactor.

The protein resides in the mitochondrion matrix. It carries out the reaction N(6)-[(R)-dihydrolipoyl]-L-lysyl-[protein] + NAD(+) = N(6)-[(R)-lipoyl]-L-lysyl-[protein] + NADH + H(+). This Dictyostelium discoideum (Social amoeba) protein is Dihydrolipoyl dehydrogenase, mitochondrial (lpd).